We begin with the raw amino-acid sequence, 359 residues long: Membrane-bound lytic murein transglycosylase C (359 aa).

A signal peptide spans methionine 1–serine 16. Cysteine 17 is lipidated: N-palmitoyl cysteine. A lipid anchor (S-diacylglycerol cysteine) is attached at cysteine 17.

The protein belongs to the transglycosylase Slt family.

Its subcellular location is the cell outer membrane. The catalysed reaction is Exolytic cleavage of the (1-&gt;4)-beta-glycosidic linkage between N-acetylmuramic acid (MurNAc) and N-acetylglucosamine (GlcNAc) residues in peptidoglycan, from either the reducing or the non-reducing ends of the peptidoglycan chains, with concomitant formation of a 1,6-anhydrobond in the MurNAc residue.. Murein-degrading enzyme. May play a role in recycling of muropeptides during cell elongation and/or cell division. This is Membrane-bound lytic murein transglycosylase C from Escherichia coli (strain SMS-3-5 / SECEC).